A 167-amino-acid polypeptide reads, in one-letter code: Aphrodisin (167 aa).

An N-terminal signal peptide occupies residues 1-16 (MVKILVLALVFSLAHA). At Gln-17 the chain carries Pyrrolidone carboxylic acid. 2 disulfide bridges follow: Cys-54–Cys-58 and Cys-73–Cys-165. Asn-57 and Asn-85 each carry an N-linked (GlcNAc...) asparagine glycan.

The protein belongs to the calycin superfamily. Lipocalin family. In terms of tissue distribution, expressed in the vagina, uterus, and Bartholin's glands of female hamsters. Secreted in vaginal discharge.

The protein localises to the secreted. Its function is as follows. Acts as an aphrodisiac pheromone, reliably eliciting copulatory behavior from male hamster. In Mesocricetus auratus (Golden hamster), this protein is Aphrodisin.